The primary structure comprises 68 residues: MKSIVLIFLKFWQKFISPLYPSSCRYYPTCSTYAIMAVEKYGVLKGLIKAFFRVLRCNPFFKGGVDYP.

Belongs to the UPF0161 family.

Its subcellular location is the cell inner membrane. In terms of biological role, could be involved in insertion of integral membrane proteins into the membrane. The sequence is that of Putative membrane protein insertion efficiency factor from Aquifex aeolicus (strain VF5).